We begin with the raw amino-acid sequence, 1051 residues long: Inactive tyrosine-protein kinase 7 (1051 aa).

Positions methionine 1–alanine 22 are cleaved as a signal peptide. Ig-like C2-type domains lie at lysine 23–serine 105, serine 115–threonine 204, proline 213–leucine 298, proline 308–threonine 388, proline 393–glutamate 472, proline 487–glutamine 566, and valine 573–tyrosine 661. Residues lysine 23–threonine 685 are Extracellular-facing. Cysteine 40 and cysteine 88 form a disulfide bridge. Asparagine 103 carries N-linked (GlcNAc...) asparagine glycosylation. The cysteines at positions 137 and 187 are disulfide-linked. Asparagine 202, asparagine 255, and asparagine 264 each carry an N-linked (GlcNAc...) asparagine glycan. 5 disulfides stabilise this stretch: cysteine 234–cysteine 282, cysteine 326–cysteine 372, cysteine 414–cysteine 462, cysteine 505–cysteine 551, and cysteine 594–cysteine 645. 3 N-linked (GlcNAc...) asparagine glycosylation sites follow: asparagine 444, asparagine 548, and asparagine 627. The chain crosses the membrane as a helical span at residues isoleucine 686 to tyrosine 706. At cysteine 707–alanine 1051 the chain is on the cytoplasmic side. Positions leucine 777 to aspartate 1048 constitute a Protein kinase; inactive domain.

The protein belongs to the protein kinase superfamily. Tyr protein kinase family. Insulin receptor subfamily. As to expression, expressed in bone marrow, spleen, bursa, thymus and brain. Weakly expressed in fibroblasts. Also expressed in embryonic liver.

The protein resides in the membrane. Inactive tyrosine kinase involved in Wnt signaling. pathway. This is Inactive tyrosine-protein kinase 7 (PTK7) from Gallus gallus (Chicken).